The primary structure comprises 113 residues: Hydrogenase maturation factor HypA (113 aa).

Ni(2+) is bound at residue H2. Residues C73, C76, C89, and C92 each contribute to the Zn(2+) site.

This sequence belongs to the HypA/HybF family.

Its function is as follows. Involved in the maturation of [NiFe] hydrogenases. Required for nickel insertion into the metal center of the hydrogenase. The protein is Hydrogenase maturation factor HypA of Cereibacter sphaeroides (strain KD131 / KCTC 12085) (Rhodobacter sphaeroides).